Here is a 464-residue protein sequence, read N- to C-terminus: Fumarate hydratase class II (464 aa).

Substrate contacts are provided by residues 96-98 (SGT), 127-130 (HPND), 137-139 (SSN), and Thr185. The active-site Proton donor/acceptor is the His186. Ser316 is a catalytic residue. Residues Ser317 and 322-324 (KVN) each bind substrate.

It belongs to the class-II fumarase/aspartase family. Fumarase subfamily. In terms of assembly, homotetramer.

The protein resides in the cytoplasm. The enzyme catalyses (S)-malate = fumarate + H2O. The protein operates within carbohydrate metabolism; tricarboxylic acid cycle; (S)-malate from fumarate: step 1/1. In terms of biological role, involved in the TCA cycle. Catalyzes the stereospecific interconversion of fumarate to L-malate. This is Fumarate hydratase class II from Pseudomonas putida (strain ATCC 47054 / DSM 6125 / CFBP 8728 / NCIMB 11950 / KT2440).